We begin with the raw amino-acid sequence, 396 residues long: MSGYPGQGYQGQGYGQGYGQGYPPQGGYYPPQPGYGGYPPQPPPPQHYQYGPPQGGYQYPPQDGSRAGPSDQAHQPPQGMQQFGHGAPSDYAFQYSQCTGKRKALLIGINYFGQEGELRGCINDVRNLSNFLMEFYQYRREDMVLLTDDAQDPMSQPTRDNIVRAMHWLVEGAQPNDSLFFHYSGHGGQTEDLDGDEDDGYDEVIYPVDFRANGHIVDDDMHLWMVQPLQAGVRLTAIFDSCHSGTALDLPYVYSTSGVLKEPNLAKEAGVGLLGAVQSYARGDLGGVATSLFGFAKKAFSDKQARDRTMRTKTSPADVISWSGSKDDQTSADATIASQATGAMSYAFVSALRANRNQTYNQLLNSIRDILEGQYSQKPQLSCSHPLDTENVWFVM.

A compositionally biased stretch (gly residues) spans 1 to 20 (MSGYPGQGYQGQGYGQGYGQ). The disordered stretch occupies residues 1–86 (MSGYPGQGYQ…PQGMQQFGHG (86 aa)). Low complexity predominate over residues 47 to 62 (HYQYGPPQGGYQYPPQ). A compositionally biased stretch (polar residues) spans 72–81 (QAHQPPQGMQ). Residues His-186 and Cys-242 contribute to the active site.

It belongs to the peptidase C14B family.

In terms of biological role, involved in cell death (apoptosis). This is Metacaspase-1 (MCA1) from Pyricularia oryzae (strain 70-15 / ATCC MYA-4617 / FGSC 8958) (Rice blast fungus).